The chain runs to 383 residues: Outer membrane protein Omp-EA (383 aa).

The signal sequence occupies residues 1–21 (MKRNILAVLIPALLAAGAANA). Residues 22–30 (AEIYNKDGN) lie on the Periplasmic side of the membrane. A beta stranded membrane pass occupies residues 31 to 45 (KLDLYGKVKAMRYLS). Residues 46–58 (DADSNASNNADKS) lie on the Extracellular side of the membrane. The beta stranded transmembrane segment at 59 to 70 (YTRIGFKGQTLI) threads the bilayer. The Periplasmic portion of the chain corresponds to 71-74 (NDQL). A beta stranded transmembrane segment spans residues 75–86 (TGYGQWEYNFSL). At 87-100 (SNSESSSDAQSGNK) the chain is on the extracellular side. The beta stranded transmembrane segment at 101 to 109 (TRLGFAGLK) threads the bilayer. At 110-112 (LKD) the chain is on the periplasmic side. The chain crosses the membrane as a beta stranded span at residues 113–122 (YGSVDYGRNY). Residues 123-155 (GVIYDVEAFTDMMPEFGATGYTRTDTYMLTRGN) are Extracellular-facing. The chain crosses the membrane as a beta stranded span at residues 156–164 (SMLTWRNSD). Topologically, residues 165 to 171 (FFGLVDG) are periplasmic. Residues 172-178 (LKIALQY) form a beta stranded membrane-spanning segment. Topologically, residues 179–198 (QGKNEGSGTRATNVSNGDGY) are extracellular. The chain crosses the membrane as a beta stranded span at residues 199–206 (GASLSYKI). Over 207-209 (VEG) the chain is Periplasmic. Residues 210–219 (LTINGAMSSS) traverse the membrane as a beta stranded segment. The Extracellular segment spans residues 220 to 243 (NRLNANSASSTTSQKMAAYGSGGR). A beta stranded membrane pass occupies residues 244–252 (AEAWATGLK). Topologically, residues 253–258 (YDANGV) are periplasmic. Residues 259–268 (YLAGTYAETR) traverse the membrane as a beta stranded segment. Topologically, residues 269–296 (NTNPFSGASYTFAGNSTATAVSGYANKV) are extracellular. A beta stranded transmembrane segment spans residues 297-307 (QNTELVAQYQF). Residues 308-310 (DSG) are Periplasmic-facing. Residues 311-319 (LRPSLAYVQ) form a beta stranded membrane-spanning segment. Residues 320 to 335 (TKAKDIENGIGDADLS) are Extracellular-facing. A beta stranded membrane pass occupies residues 336-346 (KFVDVAATYYF). The Periplasmic portion of the chain corresponds to 347–351 (NKNMS). A beta stranded membrane pass occupies residues 352-361 (AFVDYKVNLL). The Extracellular portion of the chain corresponds to 362–372 (SDSNKLHLNTD). The beta stranded transmembrane segment at 373–383 (DIVAVGLVYQF) threads the bilayer.

The protein belongs to the Gram-negative porin family. Homotrimer.

Its subcellular location is the cell outer membrane. Functionally, may play an important role in maintaining pathogenicity in plants. The sequence is that of Outer membrane protein Omp-EA (omp-EA) from Erwinia amylovora (Fire blight bacteria).